The chain runs to 251 residues: SRR1-like protein (251 aa).

The protein belongs to the SRR1 family.

The protein localises to the cytoplasm. The protein resides in the nucleus. The sequence is that of SRR1-like protein from Schizosaccharomyces pombe (strain 972 / ATCC 24843) (Fission yeast).